We begin with the raw amino-acid sequence, 140 residues long: Large ribosomal subunit protein bL17 (140 aa).

The protein belongs to the bacterial ribosomal protein bL17 family. Part of the 50S ribosomal subunit. Contacts protein L32.

The protein is Large ribosomal subunit protein bL17 of Rhizobium rhizogenes (strain K84 / ATCC BAA-868) (Agrobacterium radiobacter).